We begin with the raw amino-acid sequence, 79 residues long: Acyl carrier protein (79 aa).

The region spanning 2 to 77 (ADFEARVKEI…SAIDYVKTHV (76 aa)) is the Carrier domain. Position 37 is an O-(pantetheine 4'-phosphoryl)serine (S37).

The protein belongs to the acyl carrier protein (ACP) family. In terms of processing, 4'-phosphopantetheine is transferred from CoA to a specific serine of apo-ACP by AcpS. This modification is essential for activity because fatty acids are bound in thioester linkage to the sulfhydryl of the prosthetic group.

The protein resides in the cytoplasm. It participates in lipid metabolism; fatty acid biosynthesis. In terms of biological role, carrier of the growing fatty acid chain in fatty acid biosynthesis. In Endomicrobium trichonymphae, this protein is Acyl carrier protein.